We begin with the raw amino-acid sequence, 111 residues long: Dynein light chain Tctex-type (111 aa).

This sequence belongs to the dynein light chain Tctex-type family. As to quaternary structure, the cytoplasmic dynein complex consists of two catalytic heavy chains (HCs) and a number of non-catalytic subunits presented by intermediate chains (ICs), light intermediate chains (LICs) and light chains (LCs).

The protein resides in the cytoplasm. Its subcellular location is the cytoskeleton. Its function is as follows. Acts as one of several non-catalytic accessory components of the cytoplasmic dynein complex that are thought to be involved in linking dynein to cargos and to adapter proteins that regulate dynein function. Cytoplasmic dynein acts as a motor for the intracellular retrograde motility of vesicles and organelles along microtubules. Required for spermatid differentiation. Is not required for polarized transport in rhabdomere development and appears to be a non-essential component of the cytoplasmic dynein complex. The chain is Dynein light chain Tctex-type (Dlc90F) from Drosophila melanogaster (Fruit fly).